The chain runs to 1073 residues: Carbamoyl phosphate synthase large chain (1073 aa).

The segment at 1–403 is carboxyphosphate synthetic domain; that stretch reads MPKRTDIKSI…SLQKALRGLE (403 aa). Arg129, Arg169, Gly175, Gly176, Glu208, Leu210, Glu215, Gly241, Val242, His243, Gln285, and Glu299 together coordinate ATP. Positions 133-328 constitute an ATP-grasp 1 domain; it reads DKAMKSIGLA…IARVAAKLAV (196 aa). 3 residues coordinate Mg(2+): Gln285, Glu299, and Asn301. Positions 285, 299, and 301 each coordinate Mn(2+). An oligomerization domain region spans residues 404–553; that stretch reads VGVCGLDPKL…YSTYEEECEA (150 aa). Residues 554 to 935 are carbamoyl phosphate synthetic domain; sequence NPSTRDKIMI…AFAKAQMGAS (382 aa). An ATP-grasp 2 domain is found at 678 to 869; the sequence is QQMVERLNLR…LAMIAARVMA (192 aa). ATP contacts are provided by Arg714, His753, Leu755, Glu760, Gly785, Val786, His787, Ser788, Gln828, and Glu840. Mg(2+)-binding residues include Gln828, Glu840, and Asn842. Mn(2+) contacts are provided by Gln828, Glu840, and Asn842. Residues 936–1073 form the MGS-like domain; it reads EVLPTGGTAF…LQDLHAGLKA (138 aa). Residues 936–1073 are allosteric domain; the sequence is EVLPTGGTAF…LQDLHAGLKA (138 aa).

It belongs to the CarB family. Composed of two chains; the small (or glutamine) chain promotes the hydrolysis of glutamine to ammonia, which is used by the large (or ammonia) chain to synthesize carbamoyl phosphate. Tetramer of heterodimers (alpha,beta)4. The cofactor is Mg(2+). Mn(2+) serves as cofactor.

It catalyses the reaction hydrogencarbonate + L-glutamine + 2 ATP + H2O = carbamoyl phosphate + L-glutamate + 2 ADP + phosphate + 2 H(+). It carries out the reaction hydrogencarbonate + NH4(+) + 2 ATP = carbamoyl phosphate + 2 ADP + phosphate + 2 H(+). Its pathway is amino-acid biosynthesis; L-arginine biosynthesis; carbamoyl phosphate from bicarbonate: step 1/1. It participates in pyrimidine metabolism; UMP biosynthesis via de novo pathway; (S)-dihydroorotate from bicarbonate: step 1/3. In terms of biological role, large subunit of the glutamine-dependent carbamoyl phosphate synthetase (CPSase). CPSase catalyzes the formation of carbamoyl phosphate from the ammonia moiety of glutamine, carbonate, and phosphate donated by ATP, constituting the first step of 2 biosynthetic pathways, one leading to arginine and/or urea and the other to pyrimidine nucleotides. The large subunit (synthetase) binds the substrates ammonia (free or transferred from glutamine from the small subunit), hydrogencarbonate and ATP and carries out an ATP-coupled ligase reaction, activating hydrogencarbonate by forming carboxy phosphate which reacts with ammonia to form carbamoyl phosphate. This chain is Carbamoyl phosphate synthase large chain, found in Pseudomonas syringae pv. tomato (strain ATCC BAA-871 / DC3000).